The sequence spans 535 residues: Keratin, type II cytoskeletal 79 (535 aa).

Residues 1–12 (MRSSVSRQTYST) show a composition bias toward polar residues. The interval 1–52 (MRSSVSRQTYSTKGGFSSNSASGGSGSQARTSFSSVTVSRSSGSGGGAHCGP) is disordered. The tract at residues 1–141 (MRSSVSRQTY…DPEIQRVRTQ (141 aa)) is head. A compositionally biased stretch (low complexity) spans 32–42 (SFSSVTVSRSS). Gly residues predominate over residues 43 to 52 (GSGGGAHCGP). The coil 1A stretch occupies residues 142 to 177 (EREQIKTLNNKFASFIDKVRFLEQQNKVLETKWALL). In terms of domain architecture, IF rod spans 142–457 (EREQIKTLNN…KLLESEESRM (316 aa)). The linker 1 stretch occupies residues 178–198 (QEQGQNLGVTRNNLEPLFEAY). The interval 199-290 (LGSMRSTLDR…QLYEMELSQV (92 aa)) is coil 1B. The segment at 291–314 (QTHVSNTNVVLSMDNNRNLDLDSI) is linker 12. Residues 315–453 (IAEVKAQYEL…ATYRKLLESE (139 aa)) are coil 2. A tail region spans residues 454-535 (ESRMSGECPS…TTVKTSSQRY (82 aa)).

This sequence belongs to the intermediate filament family. As to quaternary structure, heterotetramer of two type I and two type II keratins. Expressed in skeletal muscle, skin and scalp, but not in any other tissues or organs examined.

The polypeptide is Keratin, type II cytoskeletal 79 (KRT79) (Homo sapiens (Human)).